A 386-amino-acid polypeptide reads, in one-letter code: Succinate--CoA ligase [ADP-forming] subunit beta (386 aa).

Residues 9–244 form the ATP-grasp domain; it reads KEILHKFNVP…YDEEVKEEIE (236 aa). Residues Lys46, 53-55, Glu99, Ser102, and Glu107 contribute to the ATP site; that span reads GRG. Mg(2+)-binding residues include Asn199 and Asp213. Residues Asn264 and 321–323 each bind substrate; that span reads GIM.

It belongs to the succinate/malate CoA ligase beta subunit family. Heterotetramer of two alpha and two beta subunits. Requires Mg(2+) as cofactor.

It catalyses the reaction succinate + ATP + CoA = succinyl-CoA + ADP + phosphate. The enzyme catalyses GTP + succinate + CoA = succinyl-CoA + GDP + phosphate. It participates in carbohydrate metabolism; tricarboxylic acid cycle; succinate from succinyl-CoA (ligase route): step 1/1. Its function is as follows. Succinyl-CoA synthetase functions in the citric acid cycle (TCA), coupling the hydrolysis of succinyl-CoA to the synthesis of either ATP or GTP and thus represents the only step of substrate-level phosphorylation in the TCA. The beta subunit provides nucleotide specificity of the enzyme and binds the substrate succinate, while the binding sites for coenzyme A and phosphate are found in the alpha subunit. In Wolbachia sp. subsp. Brugia malayi (strain TRS), this protein is Succinate--CoA ligase [ADP-forming] subunit beta.